The following is a 1325-amino-acid chain: Sperm-specific sodium:proton exchanger (1325 aa).

Residues 1 to 29 (MKKRVVKLRELVPAVAALAVAVLIQSATG) form the signal peptide. The interval 28 to 68 (TGSSGGSGHTPTTQATHADDHDLTTHNGTEEHDDGHDDGHD) is disordered. The Extracellular segment spans residues 30-76 (SSGGSGHTPTTQATHADDHDLTTHNGTEEHDDGHDDGHDDLHAHAPK). The span at 44–68 (HADDHDLTTHNGTEEHDDGHDDGHD) shows a compositional bias: basic and acidic residues. His-73 is an a 1,2-diacylglycero-3-phosphate binding site. Residues 77-96 (VIVFISGSCLFGAISRSLFK) form a helical membrane-spanning segment. Over 97-101 (KLPIP) the chain is Cytoplasmic. The helical transmembrane segment at 102-119 (YTVVLLILGAILGVVASN) threads the bilayer. Residues 120–135 (VPLVEEHTRDVAHMDP) lie on the Extracellular side of the membrane. A helical transmembrane segment spans residues 136 to 152 (HVLLQIFLPVLIFESAF). The Cytoplasmic segment spans residues 153 to 162 (AMDVHTFMRS). Residues 163–188 (FSQVCILALFGLVVASVLTAVLAMNL) traverse the membrane as a helical segment. A transport core domain region spans residues 163-250 (FSQVCILALF…AIVIFNVFMK (88 aa)). The Extracellular segment spans residues 189-194 (FNYNWN). The helical transmembrane segment at 195 to 220 (FSEAMMFGAIMSATDPVAVVALLKDL) threads the bilayer. Residues 221–223 (GAS) lie on the Cytoplasmic side of the membrane. A helical transmembrane segment spans residues 224 to 249 (KQLGTIIEGESLLNDGCAIVIFNVFM). The short motif at 237–238 (ND) is the Essential for sodium:proton exchange element. Topologically, residues 250–260 (KMVFFPQLTST) are extracellular. Residues 261-292 (VGQNVLYFLQVAVAGPLWGYAVAKVTVFFLSH) form a helical membrane-spanning segment. At 293 to 296 (IFND) the chain is on the cytoplasmic side. Residues 297-319 (ALVEITITLAATYLTYYIGDIWL) form a helical membrane-spanning segment. Topologically, residues 320 to 322 (EVS) are extracellular. Residues 323–336 (GVLAVVVLGLIVNA) form a helical membrane-spanning segment. The Cytoplasmic segment spans residues 337 to 343 (EKTSISP). Residues 344-377 (EVEVFLHRFWEMLAYLANTLIFMMVGVVVTQKAL) traverse the membrane as a helical segment. The Extracellular portion of the chain corresponds to 378–382 (VAVDK). A helical membrane pass occupies residues 383 to 412 (MDWFYLIILYLAITIIRGMVISLFSPILSR). The interval 383–481 (MDWFYLIILY…TTIQTLLRIL (99 aa)) is transport core domain. Residues 413–418 (IGYGLT) are Cytoplasmic-facing. A helical transmembrane segment spans residues 419-446 (WRNAVIMTWGGLRGAVGLALALVVENLA). Topologically, residues 447–450 (GNDV) are extracellular. A helical transmembrane segment spans residues 451–481 (IGSKFLFHTAGIVVLTLVINATTIQTLLRIL). Over 482 to 677 (GMSDISIPKR…GKLMYKICHH (196 aa)) the chain is Cytoplasmic. An interacts with the S4 segment of voltage sensor domain region spans residues 575 to 620 (FADMMEEARLRMLKAEKISYWKQFEHGMLAREALRLLVQHAEVAAD). The tract at residues 605-620 (REALRLLVQHAEVAAD) is interacts with the transport core domain; can lock the transporter in the inward conformation. A helical membrane pass occupies residues 678–708 (MAFEVTINIAIVLNIVPIIMEFVVQDKMASV). Residues 709–724 (STMAAPGSTVSSEPSS) lie on the Extracellular side of the membrane. The chain crosses the membrane as a helical span at residues 725–752 (LQKIEDALRISNYVFFVIYAIEAIVKIL). At 753–760 (GLGRHYIV) the chain is on the cytoplasmic side. Residues 761–784 (SHWNKFDAFILVVALVDIIIAETL) traverse the membrane as a helical segment. At 785-795 (LKGSITINLSS) the chain is on the extracellular side. A helical transmembrane segment spans residues 796–822 (IKVVKLFRLLRGLRMLRLTKALIPKLI). The segment at 796–857 (IKVVKLFRLL…EEVGKIIDRM (62 aa)) is S4 segment of voltage sensor domain. At 823-1325 (LVVNGKINNQ…EEGAAPRVNV (503 aa)) the chain is on the cytoplasmic side. The segment at 860-919 (NKKILRELKHISETGRLQVVKELGLLQREHPGIAVSVKTRQAIRTILNHSRETIHELQGA) is interacts with the S4 segment of voltage sensor domain. A cNMP-binding domain region spans residues 968–1068 (KLIDFIKARA…CETTVQVYFI (101 aa)). Gly-1043 provides a ligand contact to 3',5'-cyclic AMP. The 3',5'-cyclic GMP site is built by Gly-1043, Glu-1044, and Met-1045. Residues Met-1045, Gly-1046, Arg-1053, and Asn-1054 each coordinate 3',5'-cyclic AMP. Positions 1053 and 1054 each coordinate 3',5'-cyclic GMP. Residues 1237–1325 (MLSRKSSGAA…EEGAAPRVNV (89 aa)) are disordered. Positions 1266 to 1280 (VSPSVPTKTTPKPKS) are enriched in low complexity.

It belongs to the monovalent cation:proton antiporter 1 (CPA1) transporter (TC 2.A.36) family. In terms of assembly, homodimer; the dimerization is stabilized in the presence of phosphatidic acids.

The protein resides in the cell projection. The protein localises to the cilium. Its subcellular location is the flagellum membrane. It carries out the reaction Na(+)(in) + H(+)(out) = Na(+)(out) + H(+)(in). With respect to regulation, gated by voltage and stimulated by cyclic nucleotides which shift the activation voltage closer to resting membrane potential. Not inhibited by common sodium:proton exchanger inhibitors such as amiloride. Electroneutral sodium:proton antiporter that regulates intracellular pH of sperm along with capacitation and fertility. Activated in response to egg-derived chemoattractants, couples membrane voltage to sodium:proton exchange and transduces membrane hyperpolarization to cytoplasmic alkalization to cAMP signaling and ultimately to sperm motility. This is Sperm-specific sodium:proton exchanger from Strongylocentrotus purpuratus (Purple sea urchin).